A 662-amino-acid polypeptide reads, in one-letter code: UvrABC system protein B (662 aa).

A Helicase ATP-binding domain is found at 25–414 (AGLNSKKRSQ…GTVVELIIRP (390 aa)). 38–45 (GITGSGKT) is an ATP binding site. Residues 91 to 114 (YYDYYQPEAYIVRTDTFIEKDSSI) carry the Beta-hairpin motif. The Helicase C-terminal domain occupies 430 to 592 (QVEDLISEIQ…IIPKTINSAI (163 aa)). The 36-residue stretch at 622-657 (KSYMDKLKKEMFKAASNLEFEQAAKLRNQLKTLEKA) folds into the UVR domain.

Belongs to the UvrB family. In terms of assembly, forms a heterotetramer with UvrA during the search for lesions. Interacts with UvrC in an incision complex.

It is found in the cytoplasm. The UvrABC repair system catalyzes the recognition and processing of DNA lesions. A damage recognition complex composed of 2 UvrA and 2 UvrB subunits scans DNA for abnormalities. Upon binding of the UvrA(2)B(2) complex to a putative damaged site, the DNA wraps around one UvrB monomer. DNA wrap is dependent on ATP binding by UvrB and probably causes local melting of the DNA helix, facilitating insertion of UvrB beta-hairpin between the DNA strands. Then UvrB probes one DNA strand for the presence of a lesion. If a lesion is found the UvrA subunits dissociate and the UvrB-DNA preincision complex is formed. This complex is subsequently bound by UvrC and the second UvrB is released. If no lesion is found, the DNA wraps around the other UvrB subunit that will check the other stand for damage. The polypeptide is UvrABC system protein B (Rickettsia typhi (strain ATCC VR-144 / Wilmington)).